A 349-amino-acid polypeptide reads, in one-letter code: Dihydroorotate dehydrogenase (quinone) (349 aa).

Residues 65-69 and A89 each bind FMN; that span reads AGFDK. Position 69 (K69) interacts with substrate. A substrate-binding site is contributed by 114 to 118; that stretch reads NRMGF. N143 and N176 together coordinate FMN. N176 serves as a coordination point for substrate. S179 functions as the Nucleophile in the catalytic mechanism. Substrate is bound at residue N181. Positions 212 and 240 each coordinate FMN. 241 to 242 contacts substrate; that stretch reads NT. A disordered region spans residues 244–265; that stretch reads TERPESLSHPHAGEQGGLSGAP. Positions 245–255 are enriched in basic and acidic residues; the sequence is ERPESLSHPHA. FMN-binding positions include G263, G290, and 311-312; that span reads YT.

The protein belongs to the dihydroorotate dehydrogenase family. Type 2 subfamily. In terms of assembly, monomer. The cofactor is FMN.

The protein localises to the cell membrane. The catalysed reaction is (S)-dihydroorotate + a quinone = orotate + a quinol. It participates in pyrimidine metabolism; UMP biosynthesis via de novo pathway; orotate from (S)-dihydroorotate (quinone route): step 1/1. In terms of biological role, catalyzes the conversion of dihydroorotate to orotate with quinone as electron acceptor. The sequence is that of Dihydroorotate dehydrogenase (quinone) from Halobacterium salinarum (strain ATCC 29341 / DSM 671 / R1).